A 596-amino-acid chain; its full sequence is DNA polymerase kappa (596 aa).

One can recognise a UmuC domain in the interval 85–320 (CVCIDMDAYF…LPIRKVGGIG (236 aa)). Residues D89 and D180 each contribute to the Mg(2+) site. E181 is an active-site residue. The UBZ4-type zinc-finger motif lies at 516-545 (TRPCPICGTDVENRLDVMNCHVDECILKVQ). Positions 519, 522, 536, and 540 each coordinate Zn(2+). Residues 559–584 (NKSTQKPERPSTKKRKLQEKRPKAKK) are disordered. Positions 570–584 (TKKRKLQEKRPKAKK) are enriched in basic residues.

The protein belongs to the DNA polymerase type-Y family. Mg(2+) is required as a cofactor. It depends on Mn(2+) as a cofactor.

It is found in the nucleus. It catalyses the reaction DNA(n) + a 2'-deoxyribonucleoside 5'-triphosphate = DNA(n+1) + diphosphate. In terms of biological role, DNA polymerase specifically involved in DNA repair. Plays an important role in translesion synthesis, where the normal high-fidelity DNA polymerases cannot proceed and DNA synthesis stalls. Depending on the context, it inserts the correct base, but causes frequent base transitions, transversions and frameshifts. Lacks 3'-5' proofreading exonuclease activity. Forms a Schiff base with 5'-deoxyribose phosphate at abasic sites, but does not have lyase activity. This Caenorhabditis elegans protein is DNA polymerase kappa (polk-1).